A 369-amino-acid polypeptide reads, in one-letter code: Homoserine O-succinyltransferase (369 aa).

Positions 90–93 are important for substrate specificity; that stretch reads GISA. One can recognise an AB hydrolase-1 domain in the interval 107-353; sequence WWSGAVGVRA…YGHDAFLKED (247 aa). The active-site Nucleophile is S175. Residue R236 coordinates substrate. Residues D316 and H346 contribute to the active site. D347 serves as a coordination point for substrate.

Belongs to the AB hydrolase superfamily. MetX family. Homodimer.

Its subcellular location is the cytoplasm. The catalysed reaction is L-homoserine + succinyl-CoA = O-succinyl-L-homoserine + CoA. Its pathway is amino-acid biosynthesis; L-methionine biosynthesis via de novo pathway; O-succinyl-L-homoserine from L-homoserine: step 1/1. Transfers a succinyl group from succinyl-CoA to L-homoserine, forming succinyl-L-homoserine. This Brevundimonas diminuta (strain ATCC 11568 / DSM 7234 / NBRC 12697 / NCIMB 9393 / NCTC 8545) protein is Homoserine O-succinyltransferase.